Reading from the N-terminus, the 338-residue chain is tRNA N6-adenosine threonylcarbamoyltransferase (338 aa).

Residues histidine 114 and histidine 118 each contribute to the Fe cation site. Substrate is bound by residues leucine 136 to glycine 140, aspartate 169, glycine 182, aspartate 186, and asparagine 275. Fe cation is bound at residue aspartate 301.

The protein belongs to the KAE1 / TsaD family. Fe(2+) serves as cofactor.

It is found in the cytoplasm. It catalyses the reaction L-threonylcarbamoyladenylate + adenosine(37) in tRNA = N(6)-L-threonylcarbamoyladenosine(37) in tRNA + AMP + H(+). Its function is as follows. Required for the formation of a threonylcarbamoyl group on adenosine at position 37 (t(6)A37) in tRNAs that read codons beginning with adenine. Is involved in the transfer of the threonylcarbamoyl moiety of threonylcarbamoyl-AMP (TC-AMP) to the N6 group of A37, together with TsaE and TsaB. TsaD likely plays a direct catalytic role in this reaction. The chain is tRNA N6-adenosine threonylcarbamoyltransferase from Streptococcus equi subsp. zooepidemicus (strain MGCS10565).